Here is a 203-residue protein sequence, read N- to C-terminus: Protein GrpE (203 aa).

Residues 1–38 (MTQDQTAEQMPAAESADQSADQGPAAESAAPPAVDSER) are disordered.

Belongs to the GrpE family. Homodimer.

Its subcellular location is the cytoplasm. Functionally, participates actively in the response to hyperosmotic and heat shock by preventing the aggregation of stress-denatured proteins, in association with DnaK and GrpE. It is the nucleotide exchange factor for DnaK and may function as a thermosensor. Unfolded proteins bind initially to DnaJ; upon interaction with the DnaJ-bound protein, DnaK hydrolyzes its bound ATP, resulting in the formation of a stable complex. GrpE releases ADP from DnaK; ATP binding to DnaK triggers the release of the substrate protein, thus completing the reaction cycle. Several rounds of ATP-dependent interactions between DnaJ, DnaK and GrpE are required for fully efficient folding. The polypeptide is Protein GrpE (Paramagnetospirillum magneticum (strain ATCC 700264 / AMB-1) (Magnetospirillum magneticum)).